Reading from the N-terminus, the 701-residue chain is CRS2-associated factor 1, chloroplastic (701 aa).

A chloroplast-targeting transit peptide spans 1-77 (MATSHLTSRS…ENGEPAAGVR (77 aa)). CRM domains are found at residues 183–279 (EPLT…TRPI) and 301–397 (DGLT…LPPL). Residues 581–603 (GILLLFKQAIDSGMALVLNENEF) form a CRS2 binding region.

As to quaternary structure, interacts with CRS2 and RNA. Part of large ribonucleo-protein complexes that include group IIB introns, CRS2 and CAF1.

It localises to the plastid. The protein resides in the chloroplast stroma. Functionally, required for the splicing of group IIB introns in chloroplasts. Forms splicing particles with CRS2. Interacts with RNA and confers intron specificity of the splicing particles. In Oryza sativa subsp. japonica (Rice), this protein is CRS2-associated factor 1, chloroplastic.